The primary structure comprises 176 residues: NAD(P)H-quinone oxidoreductase subunit 6, chloroplastic (176 aa).

5 helical membrane-spanning segments follow: residues 10-30 (FLLV…VLLA), 33-53 (IYSA…YILA), 61-81 (AQLL…VMFI), 92-112 (LWTV…VSLI), and 152-172 (FFLP…GAIA).

Belongs to the complex I subunit 6 family. In terms of assembly, NDH is composed of at least 16 different subunits, 5 of which are encoded in the nucleus.

It localises to the plastid. It is found in the chloroplast thylakoid membrane. It carries out the reaction a plastoquinone + NADH + (n+1) H(+)(in) = a plastoquinol + NAD(+) + n H(+)(out). It catalyses the reaction a plastoquinone + NADPH + (n+1) H(+)(in) = a plastoquinol + NADP(+) + n H(+)(out). Functionally, NDH shuttles electrons from NAD(P)H:plastoquinone, via FMN and iron-sulfur (Fe-S) centers, to quinones in the photosynthetic chain and possibly in a chloroplast respiratory chain. The immediate electron acceptor for the enzyme in this species is believed to be plastoquinone. Couples the redox reaction to proton translocation, and thus conserves the redox energy in a proton gradient. This Guizotia abyssinica (Niger) protein is NAD(P)H-quinone oxidoreductase subunit 6, chloroplastic (ndhG).